Reading from the N-terminus, the 645-residue chain is Serine/threonine-protein kinase Nek11 (645 aa).

The 259-residue stretch at 29-287 (YVLQQKLGSG…AIEILKIPYL (259 aa)) folds into the Protein kinase domain. ATP contacts are provided by residues 35-43 (LGSGSFGTV) and Lys61. Residue Asp158 is the Proton acceptor of the active site. The residue at position 273 (Ser273) is a Phosphoserine; by CHEK1. Residues 346 to 385 (RLRKLQAADEKARKLKKIVEEKYEENSKRMQELRSRNFQQ) adopt a coiled-coil conformation. Residues 399 to 445 (GMEEKEEQPEGRLSCSPQDEDEERWQGREEESDEPTLENLPESQPIP) are disordered.

This sequence belongs to the protein kinase superfamily. NEK Ser/Thr protein kinase family. NIMA subfamily. As to quaternary structure, interacts with isoform 1 of NEK2. It depends on Mn(2+) as a cofactor. The cofactor is Mg(2+). Post-translationally, phosphorylated by NEK2. Phosphorylation at Ser-273 is important for its activation. As to expression, poorly expressed in cerebellum, trachea, lung, appendix, and uterus.

Its subcellular location is the nucleus. The protein resides in the nucleolus. The enzyme catalyses L-seryl-[protein] + ATP = O-phospho-L-seryl-[protein] + ADP + H(+). The catalysed reaction is L-threonyl-[protein] + ATP = O-phospho-L-threonyl-[protein] + ADP + H(+). Its activity is regulated as follows. Autorepressed by intramolecular binding of the C-terminus which dissociates following phosphorylation by NEK2 isoform 1 in G1/S-arrested cells. NEK2 isoform 2 is largely not present in the nucleolus, and does not appear to phosphorylate NEK11. Activated in response to DNA damage. Inhibited by zinc. Its function is as follows. Protein kinase which plays an important role in the G2/M checkpoint response to DNA damage. Controls degradation of CDC25A by directly phosphorylating it on residues whose phosphorylation is required for BTRC-mediated polyubiquitination and degradation. This chain is Serine/threonine-protein kinase Nek11, found in Homo sapiens (Human).